A 68-amino-acid polypeptide reads, in one-letter code: Putative membrane protein insertion efficiency factor (68 aa).

Belongs to the UPF0161 family.

The protein resides in the cell inner membrane. Functionally, could be involved in insertion of integral membrane proteins into the membrane. The polypeptide is Putative membrane protein insertion efficiency factor (Persephonella marina (strain DSM 14350 / EX-H1)).